The following is a 374-amino-acid chain: MPLLTTPYAELDLIRQPEQANDPLQAFDAADEYLLAQLHEQAPDANCRVLVLNDSFGALAVSLAGRLQVVSSGDSHLAHLGLEKNLTRNGLTFDSVPFVPASEHWQGLFDRVLVRVPKTLALLEEQLIRLQGHLAPGAQVIAGAMIKHLPRAAGDLMEKYIGPVQASLAQKKARLLTATVAERPLARSPYPSRYHLDAPALELVNHANVFCREGLDIGTRAFLPHLPRDLGNARVADLGCGNGVLAIASALGNPDAEYTLVDESYMAVQSAQENWRAALGERAANFVAADGLAGVEKQSLDVVLCNPPFHQQQVVGDFLAWRMFQQAREALVVGGALYIVGNRHLGYHSKLARLFRGVEQVAATPKFVILKARK.

The protein belongs to the methyltransferase superfamily. RlmG family.

Its subcellular location is the cytoplasm. The catalysed reaction is guanosine(1835) in 23S rRNA + S-adenosyl-L-methionine = N(2)-methylguanosine(1835) in 23S rRNA + S-adenosyl-L-homocysteine + H(+). Functionally, specifically methylates the guanine in position 1835 (m2G1835) of 23S rRNA. This Pseudomonas putida (strain GB-1) protein is Ribosomal RNA large subunit methyltransferase G.